Here is a 607-residue protein sequence, read N- to C-terminus: All-trans-retinol 13,14-reductase (607 aa).

An N-terminal signal peptide occupies residues 1–22; it reads MWFAVVAIFLALVAFLYRYVVG.

Belongs to the carotenoid/retinoid oxidoreductase family. CrtISO subfamily. It depends on NAD(+) as a cofactor. The cofactor is NADP(+). FAD serves as cofactor.

Its subcellular location is the endoplasmic reticulum membrane. The catalysed reaction is all-trans-13,14-dihydroretinol + A = all-trans-retinol + AH2. In terms of biological role, catalyzes the saturation of all-trans-retinol to all-trans-13,14-dihydroretinol. In addition, saturates the 7-8 double bond of all-trans-retinol to produce all-trans-7,8-dihydroretinol. Can also use vitamin A2 (all-trans-3,4-didehydroretinol) as a substrate, to produce all-trans-13,14-dihydro-3,4-didehydroretinol or all-trans-7,8-dihydro-3,4-didehydroretinol. May play a role in vitamin A metabolism. The chain is All-trans-retinol 13,14-reductase from Danio rerio (Zebrafish).